We begin with the raw amino-acid sequence, 149 residues long: Protein-export protein SecB (149 aa).

The protein belongs to the SecB family. As to quaternary structure, homotetramer, a dimer of dimers. One homotetramer interacts with 1 SecA dimer.

The protein resides in the cytoplasm. One of the proteins required for the normal export of preproteins out of the cell cytoplasm. It is a molecular chaperone that binds to a subset of precursor proteins, maintaining them in a translocation-competent state. It also specifically binds to its receptor SecA. The chain is Protein-export protein SecB from Acidithiobacillus ferrooxidans (strain ATCC 23270 / DSM 14882 / CIP 104768 / NCIMB 8455) (Ferrobacillus ferrooxidans (strain ATCC 23270)).